A 391-amino-acid chain; its full sequence is Succinate--CoA ligase [ADP-forming] subunit beta (391 aa).

Residues 9 to 246 (KHLFADYDIP…ITQEDEAEVQ (238 aa)) enclose the ATP-grasp domain. Residues K46, 53-55 (GRG), E99, L102, and E107 contribute to the ATP site. The Mg(2+) site is built by N199 and D213. Substrate is bound by residues N266 and 323–325 (GIV).

This sequence belongs to the succinate/malate CoA ligase beta subunit family. Heterotetramer of two alpha and two beta subunits. Mg(2+) is required as a cofactor.

It carries out the reaction succinate + ATP + CoA = succinyl-CoA + ADP + phosphate. The catalysed reaction is GTP + succinate + CoA = succinyl-CoA + GDP + phosphate. The protein operates within carbohydrate metabolism; tricarboxylic acid cycle; succinate from succinyl-CoA (ligase route): step 1/1. Functionally, succinyl-CoA synthetase functions in the citric acid cycle (TCA), coupling the hydrolysis of succinyl-CoA to the synthesis of either ATP or GTP and thus represents the only step of substrate-level phosphorylation in the TCA. The beta subunit provides nucleotide specificity of the enzyme and binds the substrate succinate, while the binding sites for coenzyme A and phosphate are found in the alpha subunit. The chain is Succinate--CoA ligase [ADP-forming] subunit beta from Alkalilimnicola ehrlichii (strain ATCC BAA-1101 / DSM 17681 / MLHE-1).